Here is a 207-residue protein sequence, read N- to C-terminus: Thymidylate kinase (207 aa).

7 to 14 (GPEGAGKS) is a binding site for ATP.

This sequence belongs to the thymidylate kinase family.

It carries out the reaction dTMP + ATP = dTDP + ADP. Functionally, phosphorylation of dTMP to form dTDP in both de novo and salvage pathways of dTTP synthesis. The polypeptide is Thymidylate kinase (Pseudomonas putida (strain W619)).